An 89-amino-acid chain; its full sequence is Small ribosomal subunit protein uS15 (89 aa).

It belongs to the universal ribosomal protein uS15 family. In terms of assembly, part of the 30S ribosomal subunit. Forms a bridge to the 50S subunit in the 70S ribosome, contacting the 23S rRNA.

One of the primary rRNA binding proteins, it binds directly to 16S rRNA where it helps nucleate assembly of the platform of the 30S subunit by binding and bridging several RNA helices of the 16S rRNA. Its function is as follows. Forms an intersubunit bridge (bridge B4) with the 23S rRNA of the 50S subunit in the ribosome. This is Small ribosomal subunit protein uS15 from Chloroherpeton thalassium (strain ATCC 35110 / GB-78).